Consider the following 166-residue polypeptide: Interferon gamma (166 aa).

An N-terminal signal peptide occupies residues 1–23 (MNYTSYILAFQLCVILGSSGCYC). The residue at position 24 (Q24) is a Pyrrolidone carboxylic acid. Residues N39 and N106 are each glycosylated (N-linked (GlcNAc...) asparagine). A disordered region spans residues 147-166 (SNLRKRKRRQNQIQGRRASK).

The protein belongs to the type II (or gamma) interferon family. Homodimer. Interacts with IFNGR1 (via extracellular domain); this interaction promotes IFNGR1 dimerization. In terms of tissue distribution, released primarily from activated T lymphocytes.

It localises to the secreted. In terms of biological role, type II interferon produced by immune cells such as T-cells and NK cells that plays crucial roles in antimicrobial, antiviral, and antitumor responses by activating effector immune cells and enhancing antigen presentation. Primarily signals through the JAK-STAT pathway after interaction with its receptor IFNGR1 to affect gene regulation. Upon IFNG binding, IFNGR1 intracellular domain opens out to allow association of downstream signaling components JAK2, JAK1 and STAT1, leading to STAT1 activation, nuclear translocation and transcription of IFNG-regulated genes. Many of the induced genes are transcription factors such as IRF1 that are able to further drive regulation of a next wave of transcription. Plays a role in class I antigen presentation pathway by inducing a replacement of catalytic proteasome subunits with immunoproteasome subunits. In turn, increases the quantity, quality, and repertoire of peptides for class I MHC loading. Increases the efficiency of peptide generation also by inducing the expression of activator PA28 that associates with the proteasome and alters its proteolytic cleavage preference. Up-regulates as well MHC II complexes on the cell surface by promoting expression of several key molecules such as cathepsins B/CTSB, H/CTSH, and L/CTSL. Participates in the regulation of hematopoietic stem cells during development and under homeostatic conditions by affecting their development, quiescence, and differentiation. In Lama glama (Llama), this protein is Interferon gamma (IFNG).